The primary structure comprises 423 residues: Protein phosphatase 2C 77 (423 aa).

Positions G74 to V95 are disordered. Residues L112–L411 enclose the PPM-type phosphatase domain. Mg(2+) contacts are provided by D165, D251, and S252. C257 and C331 are oxidised to a cystine. 2 residues coordinate Mg(2+): D337 and D402.

This sequence belongs to the PP2C family. In terms of assembly, interacts with SPK1, CIPK15/PKS3, GPX3, SCAR1, SCAR2, SCAR3 and SCARL. Also interacts with CIPK24/SOS2. Binds to the fibrillin precursor protein. Interacts with ABA-bounded PYR1, PYL1, PYL2, PYL3, PYL4, PYL5, PYL6, PYL8 and PYL9, and with free PYL2, PYL3 and PYL4. Interacts with and represses GHR1, and, to a lesser extent, SRK2E/OST1. It depends on Mg(2+) as a cofactor. Mn(2+) serves as cofactor.

The catalysed reaction is O-phospho-L-seryl-[protein] + H2O = L-seryl-[protein] + phosphate. The enzyme catalyses O-phospho-L-threonyl-[protein] + H2O = L-threonyl-[protein] + phosphate. With respect to regulation, phosphatase activity repressed by oxidized ATGPX3, free fatty acids (e.g. arachidonic acid (20:4) and Linolenic acid (18:3)) and by H(2)O(2). Repressed by PYR/PYL/RCAR ABA receptors in an ABA-dependent manner. In terms of biological role, repressor of the abscisic acid (ABA) signaling pathway that regulates numerous ABA responses, such as stomatal closure, osmotic water permeability of the plasma membrane (Pos), high light stress, response to glucose, seed germination and inhibition of vegetative growth. During the stomatal closure regulation, modulates the inward calcium-channel permeability as well as H(2)O(2) and oxidative burst in response to ABA and dehydration. Represses GHR1 and, to some extent, SRK2E/OST1, kinases involved in the regulation of SLAC1-dependent stomatal closure. Controls negatively fibrillin that is involved in mediating ABA-induced photoprotection. May be implicated in ABA content regulation. Involved in acquired thermotolerance of root growth and seedling survival. Required for the Erwinia amylovora harpin-induced (HrpN) drought tolerance. Involved in the hydrotropic response. In Arabidopsis thaliana (Mouse-ear cress), this protein is Protein phosphatase 2C 77.